A 410-amino-acid chain; its full sequence is Monoglucosyldiacylglycerol epimerase (410 aa).

Residues 1–14 (MAMAWLMGLGLALA) form the signal peptide. Transmembrane regions (helical) follow at residues 71–91 (ALVMLAFGIWPPLLTWMWQGF) and 96–116 (LILAASAGMVYTLGFLLSAIA). Tyr-320 functions as the Proton acceptor in the catalytic mechanism. The chain crosses the membrane as a helical span at residues 380 to 400 (IIVTINPITFIAFPVKEFFVS).

The protein belongs to the short-chain dehydrogenases/reductases (SDR) family.

The protein localises to the membrane. It carries out the reaction a 1,2-diacyl-3-O-(beta-D-glucopyranosyl)-sn-glycerol = a 1,2-diacyl-3-O-(beta-D-galactosyl)-sn-glycerol. Involved in the biosynthesis of galactolipids found in the photosynthetic membranes. Catalyzes the isomerization of monoglucosyldiacylglycerol (GlcDG) to yield monogalactosyldiacylglycerol (MGDG). This chain is Monoglucosyldiacylglycerol epimerase, found in Synechocystis sp. (strain ATCC 27184 / PCC 6803 / Kazusa).